A 397-amino-acid polypeptide reads, in one-letter code: Riboflavin biosynthesis protein RibBA (397 aa).

The DHBP synthase stretch occupies residues 1 to 199; that stretch reads MFHRIEEALE…IEDLIAYRRH (199 aa). Residues 26–27, Asp31, 138–142, and Glu162 each bind D-ribulose 5-phosphate; these read RE and RAGHT. Glu27 is a Mg(2+) binding site. His141 is a Mg(2+) binding site. Residues 200–397 are GTP cyclohydrolase II; that stretch reads HETLVTREVE…VNKLGHLLNL (198 aa). 250–254 is a GTP binding site; it reads RVHSE. Zn(2+) is bound by residues Cys255, Cys266, and Cys268. Residues Gln271, 293-295, and Thr315 each bind GTP; that span reads EGR. Asp327 functions as the Proton acceptor; for GTP cyclohydrolase activity in the catalytic mechanism. Residue Arg329 is the Nucleophile; for GTP cyclohydrolase activity of the active site. Positions 350 and 355 each coordinate GTP.

In the N-terminal section; belongs to the DHBP synthase family. The protein in the C-terminal section; belongs to the GTP cyclohydrolase II family. The cofactor is Mg(2+). Mn(2+) serves as cofactor. Zn(2+) is required as a cofactor.

The catalysed reaction is D-ribulose 5-phosphate = (2S)-2-hydroxy-3-oxobutyl phosphate + formate + H(+). It carries out the reaction GTP + 4 H2O = 2,5-diamino-6-hydroxy-4-(5-phosphoribosylamino)-pyrimidine + formate + 2 phosphate + 3 H(+). It participates in cofactor biosynthesis; riboflavin biosynthesis; 2-hydroxy-3-oxobutyl phosphate from D-ribulose 5-phosphate: step 1/1. Its pathway is cofactor biosynthesis; riboflavin biosynthesis; 5-amino-6-(D-ribitylamino)uracil from GTP: step 1/4. In terms of biological role, catalyzes the conversion of D-ribulose 5-phosphate to formate and 3,4-dihydroxy-2-butanone 4-phosphate. Functionally, catalyzes the conversion of GTP to 2,5-diamino-6-ribosylamino-4(3H)-pyrimidinone 5'-phosphate (DARP), formate and pyrophosphate. The sequence is that of Riboflavin biosynthesis protein RibBA from Bacillus cereus (strain G9842).